Here is a 133-residue protein sequence, read N- to C-terminus: Sporulation-specific protein 2 (133 aa).

It belongs to the VPS13 family. Interacts with spo13 and spo15.

Its subcellular location is the cytoplasm. It is found in the cytoskeleton. It localises to the microtubule organizing center. The protein resides in the spindle pole body. Functionally, involved in sporulation. Plays a significant role in modification of the spindle pole body prior to spore formation and is required for initiating forespore membrane formation. Assists in the localization of spo13 to the outer surface of the SPB. The protein is Sporulation-specific protein 2 (spo2) of Schizosaccharomyces pombe (strain 972 / ATCC 24843) (Fission yeast).